A 342-amino-acid chain; its full sequence is 6-hydroxytryprostatin B O-methyltransferase (342 aa).

Residue Asp-201 coordinates S-adenosyl-L-methionine. His-244 (proton acceptor) is an active-site residue.

Belongs to the class I-like SAM-binding methyltransferase superfamily. Cation-independent O-methyltransferase family. In terms of assembly, homodimer.

It catalyses the reaction 6-hydroxytryprostatin B + S-adenosyl-L-methionine = tryprostatin A + S-adenosyl-L-homocysteine + H(+). It participates in mycotoxin biosynthesis. 6-hydroxytryprostatin B O-methyltransferase; part of the gene cluster that mediates the biosynthesis of fumitremorgins, indole alkaloids that carry not only intriguing chemical structures, but also interesting biological and pharmacological activities. The biosynthesis of fumitremorgin-type alkaloids begins by condensation of the two amino acids L-tryptophan and L-proline to brevianamide F, catalyzed by the non-ribosomal peptide synthetase ftmA. Brevianamide F is then prenylated by the prenyltransferase ftmPT1/ftmB in the presence of dimethylallyl diphosphate, resulting in the formation of tryprostatin B. The three cytochrome P450 monooxygenases, ftmP450-1/ftmC, ftmP450-2/ftmE and ftmP450-3/FtmG, are responsible for the conversion of tryprostatin B to 6-hydroxytryprostatin B, tryprostatin A to fumitremorgin C and fumitremorgin C to 12,13-dihydroxyfumitremorgin C, respectively. The putative methyltransferase ftmMT/ftmD is expected for the conversion of 6-hydroxytryprostatin B to tryprostatin A. FtmPT2/FtmH catalyzes the prenylation of 12,13-dihydroxyfumitre-morgin C in the presence of dimethylallyl diphosphate, resulting in the formation of fumitremorgin B. Fumitremorgin B is further converted to verruculogen by ftmOx1/ftmF via the insertion of an endoperoxide bond between the two prenyl moieties. In some fungal species, verruculogen is further converted to fumitremorgin A, but the enzymes involved in this step have not been identified yet. In Aspergillus fumigatus (strain ATCC MYA-4609 / CBS 101355 / FGSC A1100 / Af293) (Neosartorya fumigata), this protein is 6-hydroxytryprostatin B O-methyltransferase.